The following is a 288-amino-acid chain: Light-independent protochlorophyllide reductase iron-sulfur ATP-binding protein (288 aa).

ATP-binding positions include 10–15 (GIGKST) and lysine 39. Residue serine 14 participates in Mg(2+) binding. Cysteine 95 and cysteine 129 together coordinate [4Fe-4S] cluster. 180-181 (NR) is a binding site for ATP.

The protein belongs to the NifH/BchL/ChlL family. Homodimer. Protochlorophyllide reductase is composed of three subunits; ChlL, ChlN and ChlB. [4Fe-4S] cluster serves as cofactor.

The protein resides in the plastid. Its subcellular location is the chloroplast. It carries out the reaction chlorophyllide a + oxidized 2[4Fe-4S]-[ferredoxin] + 2 ADP + 2 phosphate = protochlorophyllide a + reduced 2[4Fe-4S]-[ferredoxin] + 2 ATP + 2 H2O. It participates in porphyrin-containing compound metabolism; chlorophyll biosynthesis (light-independent). Component of the dark-operative protochlorophyllide reductase (DPOR) that uses Mg-ATP and reduced ferredoxin to reduce ring D of protochlorophyllide (Pchlide) to form chlorophyllide a (Chlide). This reaction is light-independent. The L component serves as a unique electron donor to the NB-component of the complex, and binds Mg-ATP. This Chara vulgaris (Common stonewort) protein is Light-independent protochlorophyllide reductase iron-sulfur ATP-binding protein.